The primary structure comprises 183 residues: Ribosome rescue factor SmrB (183 aa).

Positions 98–173 (LDLHGLTQLQ…GDAALLVLIE (76 aa)) constitute a Smr domain.

Belongs to the SmrB family. Associates with collided ribosomes, but not with correctly translating polysomes.

Its function is as follows. Acts as a ribosome collision sensor. Detects stalled/collided disomes (pairs of ribosomes where the leading ribosome is stalled and a second ribosome has collided with it) and endonucleolytically cleaves mRNA at the 5' boundary of the stalled ribosome. Stalled/collided disomes form a new interface (primarily via the 30S subunits) that binds SmrB. Cleaved mRNA becomes available for tmRNA ligation, leading to ribosomal subunit dissociation and rescue of stalled ribosomes. The polypeptide is Ribosome rescue factor SmrB (Escherichia fergusonii (strain ATCC 35469 / DSM 13698 / CCUG 18766 / IAM 14443 / JCM 21226 / LMG 7866 / NBRC 102419 / NCTC 12128 / CDC 0568-73)).